The sequence spans 198 residues: MKSRGLVRFFFSILAVGALITSIVGFALKWGEYRGLFLTFEAGQIFSVLFWFIGVGMIFSVISQMGFFVFLTVHRFALEILRSSSLWNLLQLFFILFVAFDLMYVRFLFFGESGESLAGYAWLPVFLLIFGVITAYIKQKQSSKKTFVSSLFLMVVITALEWFPALRVNDEDWLYLMLFPLMACNAFQLLMLPKFAAK.

6 helical membrane passes run 9–29, 42–62, 90–110, 117–137, 146–166, and 173–193; these read FFFSILAVGALITSIVGFALK, AGQIFSVLFWFIGVGMIFSVI, LQLFFILFVAFDLMYVRFLFF, LAGYAWLPVFLLIFGVITAYI, TFVSSLFLMVVITALEWFPAL, and WLYLMLFPLMACNAFQLLMLP.

It localises to the cell membrane. In terms of biological role, involved in the activation of the KinB signaling pathway of sporulation. The sequence is that of KinB-signaling pathway activation protein (kbaA) from Bacillus subtilis (strain 168).